Reading from the N-terminus, the 138-residue chain is Cysteine desulfuration protein SufE (138 aa).

The active-site Cysteine persulfide intermediate is the Cys-51.

The protein belongs to the SufE family. In terms of assembly, homodimer. Interacts with SufS.

The protein resides in the cytoplasm. The protein operates within cofactor biosynthesis; iron-sulfur cluster biosynthesis. In terms of biological role, participates in cysteine desulfuration mediated by SufS. Cysteine desulfuration mobilizes sulfur from L-cysteine to yield L-alanine and constitutes an essential step in sulfur metabolism for biosynthesis of a variety of sulfur-containing biomolecules. Functions as a sulfur acceptor for SufS, by mediating the direct transfer of the sulfur atom from the S-sulfanylcysteine of SufS, an intermediate product of cysteine desulfuration process. This is Cysteine desulfuration protein SufE from Escherichia coli (strain K12 / MC4100 / BW2952).